Reading from the N-terminus, the 108-residue chain is FK506-binding protein 1 (108 aa).

The PPIase FKBP-type domain maps to 20–108; that stretch reads GDSVTIHYVG…KFEVELLKIN (89 aa).

Belongs to the FKBP-type PPIase family. FKBP1 subfamily.

The protein resides in the cytoplasm. The enzyme catalyses [protein]-peptidylproline (omega=180) = [protein]-peptidylproline (omega=0). Its activity is regulated as follows. Inhibited by both FK506 and rapamycin. Its function is as follows. PPIases accelerate the folding of proteins. It catalyzes the cis-trans isomerization of proline imidic peptide bonds in oligopeptides. The chain is FK506-binding protein 1 (FPR1) from Cryptococcus neoformans var. neoformans serotype D (strain JEC21 / ATCC MYA-565) (Filobasidiella neoformans).